Consider the following 77-residue polypeptide: U8-lycotoxin-Ls1p (77 aa).

A signal peptide spans 1–20 (MKLMIFTGLVLFAIVSLIEA). A propeptide spanning residues 21–26 (QAENEK) is cleaved from the precursor.

It belongs to the neurotoxin 19 (CSTX) family. 08 (U8-Lctx) subfamily. Contains 4 disulfide bonds. As to expression, expressed by the venom gland.

It localises to the secreted. The chain is U8-lycotoxin-Ls1p from Lycosa singoriensis (Wolf spider).